We begin with the raw amino-acid sequence, 431 residues long: Ornithine decarboxylase (431 aa).

Lysine 94 is subject to N6-(pyridoxal phosphate)lysine. Pyridoxal 5'-phosphate-binding positions include serine 226, glycine 264, and 297–300 (EPGR). Substrate is bound at residue 340 to 341 (YD). The Proton donor; shared with dimeric partner role is filled by cysteine 376. Aspartate 377 is a binding site for substrate. Residue tyrosine 405 coordinates pyridoxal 5'-phosphate.

The protein belongs to the Orn/Lys/Arg decarboxylase class-II family. Homodimer. Only the dimer is catalytically active, as the active sites are constructed of residues from both monomers. The cofactor is pyridoxal 5'-phosphate.

It catalyses the reaction L-ornithine + H(+) = putrescine + CO2. It functions in the pathway amine and polyamine biosynthesis; putrescine biosynthesis via L-ornithine pathway; putrescine from L-ornithine: step 1/1. Its activity is regulated as follows. Inhibited by antizyme (AZ) in response to polyamine levels. AZ inhibits the assembly of the functional homodimer by binding to ODC monomers and targeting them for ubiquitin-independent proteolytic destruction by the 26S proteasome. Functionally, catalyzes the first and rate-limiting step of polyamine biosynthesis that converts ornithine into putrescine, which is the precursor for the polyamines, spermidine and spermine. Polyamines are essential for cell proliferation and are implicated in cellular processes, ranging from DNA replication to apoptosis. The polypeptide is Ornithine decarboxylase (Datura stramonium (Jimsonweed)).